A 480-amino-acid polypeptide reads, in one-letter code: UDP-N-acetylmuramoylalanine--D-glutamate ligase (480 aa).

120-126 contributes to the ATP binding site; sequence GTNGKTT.

It belongs to the MurCDEF family.

The protein resides in the cytoplasm. It carries out the reaction UDP-N-acetyl-alpha-D-muramoyl-L-alanine + D-glutamate + ATP = UDP-N-acetyl-alpha-D-muramoyl-L-alanyl-D-glutamate + ADP + phosphate + H(+). The protein operates within cell wall biogenesis; peptidoglycan biosynthesis. Its function is as follows. Cell wall formation. Catalyzes the addition of glutamate to the nucleotide precursor UDP-N-acetylmuramoyl-L-alanine (UMA). The sequence is that of UDP-N-acetylmuramoylalanine--D-glutamate ligase from Nocardia farcinica (strain IFM 10152).